The sequence spans 860 residues: Protein argonaute-2 (860 aa).

The residue at position 2 (Y2) is a 3'-nitrotyrosine. One can recognise a PAZ domain in the interval 230–349; the sequence is PVIEFVCEVL…LPLEVCNIVA (120 aa). Residues 312-317 are interaction with guide RNA; it reads YFKDRH. S388 bears the Phosphoserine mark. Positions 518-819 constitute a Piwi domain; sequence LVVVILPGKT…VAFRARYHLV (302 aa). The segment at 525–567 is interaction with guide RNA; sequence GKTPVYAEVKRVGDTVLGMATQCVQMKNVQRTTPQTLSNLCLK. The interaction with GW182 family members stretch occupies residues 588–591; it reads FQQP. Residue D598 participates in a divalent metal cation binding. An interaction with GW182 family members region spans residues 651-661; the sequence is LIQFYKSTRFK. D670 lines the a divalent metal cation pocket. At P701 the chain carries 4-hydroxyproline. 3 interaction with guide RNA regions span residues 710 to 711, 754 to 762, and 791 to 813; these read KR, HAGIQGTSR, and YVRC…VAFR. Residue H808 participates in a divalent metal cation binding. 4 positions are modified to phosphoserine: S825, S829, S832, and S835.

Belongs to the argonaute family. Ago subfamily. Interacts with DICER1 through its Piwi domain and with TARBP2 during assembly of the RNA-induced silencing complex (RISC). Together, DICER1, AGO2 and TARBP2 constitute the trimeric RISC loading complex (RLC), or micro-RNA (miRNA) loading complex (miRLC). Within the RLC/miRLC, DICER1 and TARBP2 are required to process precursor miRNAs (pre-miRNAs) to mature miRNAs and then load them onto AGO2. AGO2 bound to the mature miRNA constitutes the minimal RISC and may subsequently dissociate from DICER1 and TARBP2. Note however that the term RISC has also been used to describe the trimeric RLC/miRLC. The formation of RISC complexes containing siRNAs rather than miRNAs appears to occur independently of DICER1. Interacts with AGO1. Also interacts with DDB1, DDX5, DDX6, DDX20, DHX30, DHX36, DDX47, DHX9, ELAVL, FXR1, GEMIN4, HNRNPF, IGF2BP1, ILF3, IMP8, MATR3, PABPC1, PRMT5, P4HA1, P4HB, RBM4, SART3, TNRC6A, TNRC6B, UPF1 and YBX1. Interacts with the P-body components DCP1A and XRN1. Associates with polysomes and messenger ribonucleoproteins (mNRPs). Interacts with RBM4; the interaction is modulated under stress-induced conditions, occurs under both cell proliferation and differentiation conditions and in an RNA- and phosphorylation-independent manner. Interacts with LIMD1, WTIP and AJUBA. Interacts with TRIM71. Interacts with APOBEC3G in an RNA-dependent manner. Interacts with APOBEC3A, APOBEC3C, APOBEC3F and APOBEC3H. Interacts with DICER1, TARBP2, EIF6, MOV10 and RPL7A (60S ribosome subunit); they form a large RNA-induced silencing complex (RISC). Interacts with FMR1. Interacts with ZFP36. Interacts with RC3H1; the interaction is RNA independent. Interacts with ARB2A. Found in a complex composed of AGO2, CHD7 and ARB2A. Interacts with SND1 and SYT11. Interacts with CLNK. Interacts with GARRE1. Interacts with GRB2; this interaction is important for the formation of a ternary complex containing GRB2, AGO2 and DICER1. Mg(2+) serves as cofactor. It depends on Mn(2+) as a cofactor. Hydroxylated. 4-hydroxylation appears to enhance protein stability but is not required for miRNA-binding or endonuclease activity. In terms of processing, ubiquitinated on surface-exposed lysines by a SCF-like E3 ubiquitin-protein ligase complex containing ZSWIM8 during target-directed microRNA degradation (TDMD), a process that mediates degradation of microRNAs (miRNAs). Ubiquitination by the SCF-like E3 ubiquitin-protein ligase complex containing ZSWIM8 leads to its subsequent degradation, thereby exposing miRNAs for degradation. ZSWIM8 recognizes and binds AGO2 when it is engaged with a TDMD target. Post-translationally, phosphorylation at Ser-388 by AKT3; leads to up-regulate translational repression of microRNA target and down-regulate endonucleolytic cleavage. A phosphorylation cycle of C-terminal serine cluster (Ser-825-Ser-835) regulates the release of target mRNAs. Target-binding leads to phosphorylation of these residues by CSNK1A1, which reduces the affinity of AGO2 for mRNA and enables target release. The ANKRD52-PPP6C phosphatase complex dephosphorylates the residues, which primes AGO2 for binding a new target. As to expression, ubiquitous expression in 9.5 day embryos with highest levels in forebrain, heart, limb buds, and branchial arches.

The protein localises to the cytoplasm. The protein resides in the P-body. It localises to the nucleus. It carries out the reaction Endonucleolytic cleavage to 5'-phosphomonoester.. Its function is as follows. Required for RNA-mediated gene silencing (RNAi) by the RNA-induced silencing complex (RISC). The 'minimal RISC' appears to include AGO2 bound to a short guide RNA such as a microRNA (miRNA) or short interfering RNA (siRNA). These guide RNAs direct RISC to complementary mRNAs that are targets for RISC-mediated gene silencing. The precise mechanism of gene silencing depends on the degree of complementarity between the miRNA or siRNA and its target. Binding of RISC to a perfectly complementary mRNA generally results in silencing due to endonucleolytic cleavage of the mRNA specifically by AGO2. Binding of RISC to a partially complementary mRNA results in silencing through inhibition of translation, and this is independent of endonuclease activity. May inhibit translation initiation by binding to the 7-methylguanosine cap, thereby preventing the recruitment of the translation initiation factor eIF4-E. May also inhibit translation initiation via interaction with EIF6, which itself binds to the 60S ribosomal subunit and prevents its association with the 40S ribosomal subunit. The inhibition of translational initiation leads to the accumulation of the affected mRNA in cytoplasmic processing bodies (P-bodies), where mRNA degradation may subsequently occur. In some cases RISC-mediated translational repression is also observed for miRNAs that perfectly match the 3' untranslated region (3'-UTR). Can also up-regulate the translation of specific mRNAs under certain growth conditions. Binds to the AU element of the 3'-UTR of the TNF (TNF-alpha) mRNA and up-regulates translation under conditions of serum starvation. Also required for transcriptional gene silencing (TGS), in which short RNAs known as antigene RNAs or agRNAs direct the transcriptional repression of complementary promoter regions. Regulates lymphoid and erythroid development and function, and this is independent of endonuclease activity. The protein is Protein argonaute-2 (Ago2) of Mus musculus (Mouse).